The following is a 450-amino-acid chain: MSALYMIVGTLVALGVLVTFHEFGHFWVARRCGVKVLRFSVGFGTPLVRWHDRHGTEFVVAAIPLGGYVKMLDEREAEVPAHLLEQSFNRKTVRQRIAIVAAGPIANFLLAILFFWVVALLGSQQVRPVIGSVAPESLAAQAGLEAGQELLAVDGEPVTGWNGVNLQLVRRLGESGTLEVRVQEKGSNVDSTHQVRLDGWLKGEDNPDPIASLGIRPWRPALPPVLAELDPKGPAQAAGLKLGDRLQSIDGIAVDDWQQVVDSVRARPGQRVQLKVLRDGEVLDVALELAVRGEGKARSGYMGAGVAGTEWPAEMLREVSYGPLEAVGQALSRTWTMSLLTLDSIKKMLLGELSVKNLSGPITIAKVAGASAQSGVGDFLNFLAYLSISLGVLNLLPIPVLDGGHLLFYLVEWVRGRPLSERVQAWGMQIGISLVVGVMLLALVNDLSRL.

A Zn(2+)-binding site is contributed by His21. Glu22 is a catalytic residue. His25 lines the Zn(2+) pocket. Residues 97 to 119 traverse the membrane as a helical segment; sequence IAIVAAGPIANFLLAILFFWVVA. The PDZ domain occupies 199-291; it reads GWLKGEDNPD…VLDVALELAV (93 aa). The helical transmembrane segment at 425–444 threads the bilayer; sequence AWGMQIGISLVVGVMLLALV.

The protein belongs to the peptidase M50B family. Zn(2+) serves as cofactor.

It localises to the cell inner membrane. The polypeptide is Putative zinc metalloprotease PA3649 (Pseudomonas aeruginosa (strain ATCC 15692 / DSM 22644 / CIP 104116 / JCM 14847 / LMG 12228 / 1C / PRS 101 / PAO1)).